A 215-amino-acid chain; its full sequence is Probable transaldolase (215 aa).

Lysine 83 acts as the Schiff-base intermediate with substrate in catalysis.

Belongs to the transaldolase family. Type 3B subfamily.

Its subcellular location is the cytoplasm. It carries out the reaction D-sedoheptulose 7-phosphate + D-glyceraldehyde 3-phosphate = D-erythrose 4-phosphate + beta-D-fructose 6-phosphate. It participates in carbohydrate degradation; pentose phosphate pathway; D-glyceraldehyde 3-phosphate and beta-D-fructose 6-phosphate from D-ribose 5-phosphate and D-xylulose 5-phosphate (non-oxidative stage): step 2/3. Its function is as follows. Transaldolase is important for the balance of metabolites in the pentose-phosphate pathway. In Moorella thermoacetica (strain ATCC 39073 / JCM 9320), this protein is Probable transaldolase.